Consider the following 184-residue polypeptide: Major fimbrial subunit (184 aa).

The N-terminal stretch at 1–22 (MKLSKIALAAALVFGINSVATA) is a signal peptide. The cysteines at positions 49 and 88 are disulfide-linked.

It belongs to the fimbrial protein family.

It is found in the fimbrium. Major structural component of PMF fimbriae. This chain is Major fimbrial subunit (pmfA), found in Proteus mirabilis (strain HI4320).